The sequence spans 453 residues: MSSDSSQVKLRFFTREQDESLHVQDAPMYAPISLKRYGLSEVVNHLLGFEKPVPFDFLIDGELLRISLQEYLTKHGLSSETFLNVEYTRAVLPPSFLSSFSNEDWVSSLDVGDNNKIISGSYDGVVRTWNLSGKIEKQYSGHSAPIRAVKYISNTRMVSGGNDRTLRLWKTKNEDLKQPVVDEDDEDIEDGKTLAILEGHKAPVVSIDVSDNSRILSGSYDNTIGFWSTIYKEMTVVDPMEELKNNDSKMSTAAKKRRKLTLKDGTIRRRAPLALLESHTGPVEQVSFDFKDNTVGYSISQDHTIKTWDLVTSRCIDTKTTSYSLLSLAQLPTLNLLACGSSARHITLHDPRIGSTSKITQQQLVGHKNFVVSLDTCPENEYMLCSGSHDGTVKVWDVRANSPMYTITREEQSVEKGVNDKVFAVNWSKNVGIISAGQDKKIQINKGDNIFKS.

The ubiquitin-like (UBL) domain stretch occupies residues valine 8–arginine 89. The tract at residues serine 99 to serine 453 is sufficient for interaction with ERB1 and association with 66S pre-ribosomes. WD repeat units follow at residues serine 101 to tyrosine 139, glycine 141 to proline 179, glycine 199 to valine 237, serine 278 to threonine 318, threonine 320 to isoleucine 359, glycine 366 to threonine 406, and glycine 417 to serine 453.

Belongs to the WD repeat WDR12/YTM1 family. Component of the NOP7 complex, composed of ERB1, NOP7 and YTM1. The complex is held together by ERB1, which interacts with NOP7 via its N-terminal domain and with YTM1 via a high-affinity interaction between the seven-bladed beta-propeller domains of the 2 proteins. The NOP7 complex associates with the 66S pre-ribosome. Interacts (via UBL domain) with MDN1 (via VWFA/MIDAS domain).

It is found in the nucleus. The protein resides in the nucleolus. The protein localises to the nucleoplasm. Functionally, component of the NOP7 complex, which is required for maturation of the 25S and 5.8S ribosomal RNAs and formation of the 60S ribosome. This is Ribosome biogenesis protein YTM1 from Vanderwaltozyma polyspora (strain ATCC 22028 / DSM 70294 / BCRC 21397 / CBS 2163 / NBRC 10782 / NRRL Y-8283 / UCD 57-17) (Kluyveromyces polysporus).